The following is a 107-amino-acid chain: Large ribosomal subunit protein uL24 (107 aa).

This sequence belongs to the universal ribosomal protein uL24 family. As to quaternary structure, part of the 50S ribosomal subunit.

Functionally, one of two assembly initiator proteins, it binds directly to the 5'-end of the 23S rRNA, where it nucleates assembly of the 50S subunit. Its function is as follows. One of the proteins that surrounds the polypeptide exit tunnel on the outside of the subunit. This chain is Large ribosomal subunit protein uL24, found in Solidesulfovibrio magneticus (strain ATCC 700980 / DSM 13731 / RS-1) (Desulfovibrio magneticus).